Consider the following 451-residue polypeptide: GTPase Der (451 aa).

2 consecutive EngA-type G domains span residues 5–170 (PVVA…VAPP) and 186–359 (IKLA…AAAF). GTP is bound by residues 11–18 (GRPNVGKS), 58–62 (DTGGF), 122–125 (NKAE), 192–199 (GRPNVGKS), 239–243 (DTAGL), and 304–307 (NKWD). The KH-like domain occupies 360–444 (AKLSTPRLTR…PLRIEFKSSR (85 aa)).

It belongs to the TRAFAC class TrmE-Era-EngA-EngB-Septin-like GTPase superfamily. EngA (Der) GTPase family. Associates with the 50S ribosomal subunit.

Its function is as follows. GTPase that plays an essential role in the late steps of ribosome biogenesis. The polypeptide is GTPase Der (Bordetella bronchiseptica (strain ATCC BAA-588 / NCTC 13252 / RB50) (Alcaligenes bronchisepticus)).